The primary structure comprises 828 residues: Outer membrane usher protein PmfC (828 aa).

Positions 1 to 28 (MLIPYSPHTIWKTICATLLLSLAFFSQA) are cleaved as a signal peptide.

It belongs to the fimbrial export usher family.

The protein localises to the cell outer membrane. Functionally, involved in the export and assembly of PMF fimbrial subunits across the outer membrane. The sequence is that of Outer membrane usher protein PmfC (pmfC) from Proteus mirabilis (strain HI4320).